Consider the following 497-residue polypeptide: MTDELLPYDEVMANYEPVVGLEVHVELSTATKMFCGCSTDTDKDPNTNVCPVCLGLPGSMPAINGHAVESAIRIGLALNCHIAQWCRMARKNYFYPDMTKNYQTSQYDEPICYDGWLDVEADGETFRVEIERAHMEEDAGKSLHVGGSDGRISGASHSLMDYNRAGVPLIEIVTKPIRGLGAKAPQVARAYMAQLRDIMIALGVSEARMERGNLRCDANVSLMPRGSETLGTRTETKNVNSLRSVEGALRYEIQRQGYLLSEGRKVRQQTRMWQEAGEYTIAGRDKSDAEDYRYFPEPDLVPIAPSREWVEQLRAELPELPAAKKARLSSQWQFSEADMTSAVNAGALDLLEATVDAGCQPAAARKWWLTELSRRANEAGVDLAEVGMTPCQVAQLQKLVDDGTLTDKLARQVIDGVIAGEGDPQQVVDGRGLAVVSDDAALGSAVDDVIAANPQIAEKIRGGKVQAAGALIGQIMKVMKGQADAKRVRELILEKLS.

Belongs to the GatB/GatE family. GatB subfamily. As to quaternary structure, heterotrimer of A, B and C subunits.

The enzyme catalyses L-glutamyl-tRNA(Gln) + L-glutamine + ATP + H2O = L-glutaminyl-tRNA(Gln) + L-glutamate + ADP + phosphate + H(+). The catalysed reaction is L-aspartyl-tRNA(Asn) + L-glutamine + ATP + H2O = L-asparaginyl-tRNA(Asn) + L-glutamate + ADP + phosphate + 2 H(+). Allows the formation of correctly charged Asn-tRNA(Asn) or Gln-tRNA(Gln) through the transamidation of misacylated Asp-tRNA(Asn) or Glu-tRNA(Gln) in organisms which lack either or both of asparaginyl-tRNA or glutaminyl-tRNA synthetases. The reaction takes place in the presence of glutamine and ATP through an activated phospho-Asp-tRNA(Asn) or phospho-Glu-tRNA(Gln). In Cutibacterium acnes (strain DSM 16379 / KPA171202) (Propionibacterium acnes), this protein is Aspartyl/glutamyl-tRNA(Asn/Gln) amidotransferase subunit B.